Consider the following 291-residue polypeptide: MTENRYELNKNLAQMLKGGVIMDVQNPEQARIAEAAGAAAVMALERIPADIRAAGGVSRMSDPKMIKEIQEAVSIPVMAKVRIGHFVEAQILEAIEIDYIDESEVLSPADDRFHVDKKEFQVPFVCGAKDLGEALRRIAEGASMIRTKGEPGTGDIVQAVRHMRMMNQEIRRIQNLREDELYVAAKDLQVPVELVQYVHEHGKLPVVNFAAGGVATPADAALMMQLGAEGVFVGSGIFKSGDPVKRASAIVKAVTNFRNPQILAQISEDLGEAMVGINENEIQILMAERGK.

D23 contributes to the D-ribose 5-phosphate binding site. K80 functions as the Schiff-base intermediate with D-ribose 5-phosphate in the catalytic mechanism. G152 contacts D-ribose 5-phosphate. R164 is a binding site for D-glyceraldehyde 3-phosphate. Residues G213 and G234–S235 contribute to the D-ribose 5-phosphate site.

The protein belongs to the PdxS/SNZ family. As to quaternary structure, in the presence of PdxT, forms a dodecamer of heterodimers.

It catalyses the reaction aldehydo-D-ribose 5-phosphate + D-glyceraldehyde 3-phosphate + L-glutamine = pyridoxal 5'-phosphate + L-glutamate + phosphate + 3 H2O + H(+). It functions in the pathway cofactor biosynthesis; pyridoxal 5'-phosphate biosynthesis. Catalyzes the formation of pyridoxal 5'-phosphate from ribose 5-phosphate (RBP), glyceraldehyde 3-phosphate (G3P) and ammonia. The ammonia is provided by the PdxT subunit. Can also use ribulose 5-phosphate and dihydroxyacetone phosphate as substrates, resulting from enzyme-catalyzed isomerization of RBP and G3P, respectively. The chain is Pyridoxal 5'-phosphate synthase subunit PdxS from Streptococcus pneumoniae (strain P1031).